The primary structure comprises 65 residues: UPF0434 protein IL1511 (65 aa).

The protein belongs to the UPF0434 family.

In Idiomarina loihiensis (strain ATCC BAA-735 / DSM 15497 / L2-TR), this protein is UPF0434 protein IL1511.